A 103-amino-acid chain; its full sequence is MAKKSLIQRERKRQKLEQKYHLIRRSSKKKIRSKVYPLSLSEKTKMREKLQSLPRNSAPTRLHRRCFLTGRPRANYRDFGLSGHILREMVYACLLPGATRSSW.

The protein belongs to the universal ribosomal protein uS14 family. In terms of assembly, part of the 30S ribosomal subunit.

It is found in the plastid. The protein resides in the chloroplast. Functionally, binds 16S rRNA, required for the assembly of 30S particles. The protein is Small ribosomal subunit protein uS14c of Oryza nivara (Indian wild rice).